We begin with the raw amino-acid sequence, 292 residues long: MAASIARGCQAAKGLGPSFRSARALLPVSTSVASRVLAGPGRRQITGPSEPGVFQPPPKPVIVDKRGPQRRESRFLSPEFIPPRGRTNPLKFQIERKDMLERRKILHIPEFYVGSILRVTTADPYANGKTSQFLGICIQRSGKGLGATFILRNTIEGQGVEICFELYNPRIQEIQVVKLEKRLDDSLLYLRDALPEYSTFDMNMKPVAQEPSREVPINQLKVKMKPKPWSKRWERPKFNVKGIRFDLCLTEEQMKEAQKWSQPWLEFDMMREYDTSKIETAIWNEIEASKSS.

The disordered stretch occupies residues glycine 39–proline 68. Serine 77 is modified (phosphoserine).

Belongs to the bacterial ribosomal protein bL19 family. Component of the mitochondrial ribosome large subunit (39S) which comprises a 16S rRNA and about 50 distinct proteins.

It is found in the mitochondrion. The protein is Large ribosomal subunit protein bL19m (MRPL19) of Bos taurus (Bovine).